The chain runs to 1201 residues: Autophagy-related protein 11 (1201 aa).

The interval 90 to 109 is disordered; sequence FPFLGRPSTPTKGSDNSTGT. The span at 97–109 shows a compositional bias: polar residues; sequence STPTKGSDNSTGT. The stretch at 418–452 forms a coiled coil; the sequence is LLRSDDMVRSLRDEKSKLEEKVKGSESRIRKLEDL. Disordered regions lie at residues 458-503 and 525-545; these read HMGR…SEEK and KLQKDAHAERQSNTDKIQEVQ. Residues 485 to 499 show a composition bias toward low complexity; that stretch reads RRSSVSSRRMSSNQS. Over residues 525-542 the composition is skewed to basic and acidic residues; it reads KLQKDAHAERQSNTDKIQ. Coiled coils occupy residues 566–670 and 710–828; these read RRFL…ALQA and SAKA…WKER. 2 disordered regions span residues 1052 to 1076 and 1115 to 1201; these read SMNGANPDRRSIGEASDGTSFDDEN and DARG…LQGP. The segment covering 1133–1166 has biased composition (polar residues); that stretch reads RTLSKSLDSRRNSSNSKKGPATPSQRGNDSTTDL. Residues 1191–1201 are compositionally biased toward basic and acidic residues; sequence EEVRRDQLQGP.

It belongs to the ATG11 family. In terms of assembly, homodimer and potential homooligomers.

It is found in the preautophagosomal structure membrane. Functionally, selective autophagy-specific protein required for pexophagy and mitophagy. In contrast to its Saccharomyces cerevisiae ATG11 ortholog, is not involved in non-selective autophagy nor in cytoplasm to vacuole transport (Cvt). The polypeptide is Autophagy-related protein 11 (Aspergillus oryzae (strain ATCC 42149 / RIB 40) (Yellow koji mold)).